We begin with the raw amino-acid sequence, 314 residues long: Coiled-coil domain-containing protein 92 (314 aa).

Coiled-coil stretches lie at residues 1 to 27 (MAAT…HAST) and 59 to 113 (DSSS…EKKY). Disordered regions lie at residues 153–193 (LSSS…KKSL) and 251–314 (ASDR…DRTV). Positions 176–186 (PPKDKLPETPR) are enriched in basic and acidic residues. Position 192 is a phosphoserine (serine 192). The segment covering 266 to 280 (KPHKTHVGVAHRIHH) has biased composition (basic residues).

As to quaternary structure, interacts with CEP164. Post-translationally, phosphorylated at Ser-192 by TTBK2.

It localises to the cytoplasm. The protein resides in the cytoskeleton. It is found in the microtubule organizing center. Its subcellular location is the centrosome. The protein localises to the centriole. In terms of biological role, interferon-stimulated protein that plays a role in innate immunity. The chain is Coiled-coil domain-containing protein 92 (Ccdc92) from Mus musculus (Mouse).